Here is a 3916-residue protein sequence, read N- to C-terminus: Fusarin C synthetase (3916 aa).

In terms of domain architecture, Ketosynthase family 3 (KS3) spans 9–440; the sequence is KEPIAIIGTS…GTNVHAIIEQ (432 aa). Residues C182, H319, and H360 each act as for beta-ketoacyl synthase activity in the active site. Positions 548 to 869 are malonyl-CoA:ACP transacylase (MAT) domain; sequence VFTGQGAQWP…VTRNIHDVEA (322 aa). The interval 935–1068 is N-terminal hotdog fold; that stretch reads HPLLGARSVE…GQLRVEFSSL (134 aa). Positions 935–1228 are dehydratase (DH) domain; sequence HPLLGARSVE…GLTCTSLLRP (294 aa). The region spanning 935–1231 is the PKS/mFAS DH domain; it reads HPLLGARSVE…CTSLLRPGPS (297 aa). Residue H967 is the Proton acceptor; for dehydratase activity of the active site. Residues 1084 to 1231 form a C-terminal hotdog fold region; it reads LTSVDMERFY…CTSLLRPGPS (148 aa). D1141 serves as the catalytic Proton donor; for dehydratase activity. Residues 1350–1584 are C-methyltransferase (CMeT) domain; sequence VGENLPAVVR…YMTSVMLSQA (235 aa). The segment at 2092–2266 is ketoreductase (KR) domain 1; sequence TYLLIGFTGG…AASVMHIGMV (175 aa). A Carrier 1 domain is found at 2372-2449; sequence EILAVVEEEF…ELCSTVVSHL (78 aa). Position 2409 is an O-(pantetheine 4'-phosphoryl)serine (S2409). A disordered region spans residues 2482 to 2511; sequence ASPTENEPFTIRNSPNSTQVTSESGVDEET. Polar residues predominate over residues 2486-2505; it reads ENEPFTIRNSPNSTQVTSES. The segment at 2522-2806 is condensation; the sequence is PLSFAQERLW…VNLLPLRLKL (285 aa). The interval 2973 to 3385 is adenylation; the sequence is FEKCVVNQPD…RIAGDSQIKL (413 aa). The Carrier 2 domain occupies 3493-3570; that stretch reads KPLTETQERL…EMAAKIDGFT (78 aa). At S3530 the chain carries O-(pantetheine 4'-phosphoryl)serine. The thiolester reductase (R) domain stretch occupies residues 3612-3833; that stretch reads LTGATGFLGV…DFVPVDVVAA (222 aa).

The protein in the C-terminal section; belongs to the NRP synthetase family.

Its pathway is mycotoxin biosynthesis. Its function is as follows. Fusarin C synthetase; part of the gene cluster that mediates the biosynthesis of the mycotoxin fusarin C. Within the cluster, FUS1, FUS2, FUS8 and FUS9 are sufficient for fusarin production. The roles of the other FUS members are yet undetermined. The fusarin C synthetase FUS1 is responsible for the condensation of one acetyl-coenzyme A (CoA) unit with six malonyl-CoA units and the amide linkage of the arising heptaketide and homoserine, subsequently releasing the first intermediate, prefusarin, as an alcohol with an open ring structure. The cytochrome P450 monooxygenase FUS8 participates in multiple oxidation processes at carbon C-20 and is able to use the FUS1 product as substrate, resulting in formation of 20-hydroxy-prefusarin. This reaction seems to be essential before the 2-pyrrolidone ring closure can be catalyzed by FUS2, generating 20-hydroxy-fusarin. FUS8 is able to further oxidizes carbon C-20 after ring closure, resulting in the formation of carboxy-fusarin C. As the last step, FUS9 methylates the hydroxyl group at C-21 to generate fusarin C. Fusarin C can then rearrange to epi-fusarin C, the (z)-isomers, and fusarin A and fusarin D. In Gibberella moniliformis (strain M3125 / FGSC 7600) (Maize ear and stalk rot fungus), this protein is Fusarin C synthetase.